A 589-amino-acid polypeptide reads, in one-letter code: Aspartate--tRNA ligase (589 aa).

Residue glutamate 174 participates in L-aspartate binding. Residues 198–201 are aspartate; that stretch reads QLFK. Arginine 220 serves as a coordination point for L-aspartate. ATP-binding positions include 220–222 and glutamine 229; that span reads RDE. An L-aspartate-binding site is contributed by histidine 448. Glutamate 484 contacts ATP. Arginine 491 serves as a coordination point for L-aspartate. 536–539 lines the ATP pocket; it reads GLDR.

This sequence belongs to the class-II aminoacyl-tRNA synthetase family. Type 1 subfamily. In terms of assembly, homodimer.

It localises to the cytoplasm. The enzyme catalyses tRNA(Asp) + L-aspartate + ATP = L-aspartyl-tRNA(Asp) + AMP + diphosphate. Functionally, catalyzes the attachment of L-aspartate to tRNA(Asp) in a two-step reaction: L-aspartate is first activated by ATP to form Asp-AMP and then transferred to the acceptor end of tRNA(Asp). The chain is Aspartate--tRNA ligase from Leuconostoc citreum (strain KM20).